A 522-amino-acid chain; its full sequence is 2-isopropylmalate synthase (522 aa).

The region spanning 5 to 267 is the Pyruvate carboxyltransferase domain; the sequence is VIIFDTTLRD…ETGINAKEIH (263 aa). Asp14, His202, His204, and Asn238 together coordinate Mn(2+). A regulatory domain region spans residues 392-522; sequence QLQQLVVQSD…MQKNRELGGV (131 aa).

The protein belongs to the alpha-IPM synthase/homocitrate synthase family. LeuA type 1 subfamily. As to quaternary structure, homodimer. Mn(2+) is required as a cofactor.

Its subcellular location is the cytoplasm. It catalyses the reaction 3-methyl-2-oxobutanoate + acetyl-CoA + H2O = (2S)-2-isopropylmalate + CoA + H(+). Its pathway is amino-acid biosynthesis; L-leucine biosynthesis; L-leucine from 3-methyl-2-oxobutanoate: step 1/4. Functionally, catalyzes the condensation of the acetyl group of acetyl-CoA with 3-methyl-2-oxobutanoate (2-ketoisovalerate) to form 3-carboxy-3-hydroxy-4-methylpentanoate (2-isopropylmalate). In Shewanella baltica (strain OS195), this protein is 2-isopropylmalate synthase.